Consider the following 411-residue polypeptide: Translation initiation factor 2 subunit gamma (411 aa).

In terms of domain architecture, tr-type G spans 9–203 (QAEVNIGMVG…AIQDFIPTPK (195 aa)). The G1 stretch occupies residues 18–25 (GHVDHGKT). Mg(2+) contacts are provided by D21, T25, G46, and S48. 21 to 26 (DHGKTS) serves as a coordination point for GTP. Residues 46-50 (GISIR) form a G2 region. Zn(2+) contacts are provided by C61, C64, C73, and C76. Positions 90–93 (DSPG) are G3. GTP contacts are provided by residues 146–149 (NKID) and 181–183 (SAH). Residues 146 to 149 (NKID) are G4. The tract at residues 181–183 (SAH) is G5.

This sequence belongs to the TRAFAC class translation factor GTPase superfamily. Classic translation factor GTPase family. EIF2G subfamily. Heterotrimer composed of an alpha, a beta and a gamma chain. It depends on Mg(2+) as a cofactor.

The enzyme catalyses GTP + H2O = GDP + phosphate + H(+). EIF-2 functions in the early steps of protein synthesis by forming a ternary complex with GTP and initiator tRNA. This chain is Translation initiation factor 2 subunit gamma, found in Methanocaldococcus jannaschii (strain ATCC 43067 / DSM 2661 / JAL-1 / JCM 10045 / NBRC 100440) (Methanococcus jannaschii).